The sequence spans 335 residues: DNA-directed RNA polymerase subunit alpha (335 aa).

The interval 1-233 (MQRNWRELIK…DQLTIFINFE (233 aa)) is alpha N-terminal domain (alpha-NTD). The alpha C-terminal domain (alpha-CTD) stretch occupies residues 249 to 335 (FNDHLFRSVD…DIENRRKEQE (87 aa)).

It belongs to the RNA polymerase alpha chain family. In terms of assembly, homodimer. The RNAP catalytic core consists of 2 alpha, 1 beta, 1 beta' and 1 omega subunit. When a sigma factor is associated with the core the holoenzyme is formed, which can initiate transcription.

It carries out the reaction RNA(n) + a ribonucleoside 5'-triphosphate = RNA(n+1) + diphosphate. DNA-dependent RNA polymerase catalyzes the transcription of DNA into RNA using the four ribonucleoside triphosphates as substrates. The polypeptide is DNA-directed RNA polymerase subunit alpha (Syntrophobacter fumaroxidans (strain DSM 10017 / MPOB)).